The chain runs to 504 residues: Signal recognition particle subunit SRP54 (504 aa).

Positions Met-1–Leu-295 are NG domain. GTP-binding positions include Gly-108–Thr-115, Asp-190–Arg-194, and Thr-248–Asp-251. Residues Gly-296 to Met-504 are M-domain.

The protein belongs to the GTP-binding SRP family. SRP54 subfamily. In terms of assembly, component of a signal recognition particle (SRP) complex that consists of a 7SL RNA molecule of 300 nucleotides and six protein subunits: SRP72, SRP68, SRP54, SRP19, SRP14 and SRP9. Interacts with RNPS1. Interacts with the SRP receptor subunit SRPRA.

The protein resides in the nucleus speckle. It is found in the cytoplasm. The protein localises to the endoplasmic reticulum. It catalyses the reaction GTP + H2O = GDP + phosphate + H(+). Its function is as follows. Component of the signal recognition particle (SRP) complex, a ribonucleoprotein complex that mediates the cotranslational targeting of secretory and membrane proteins to the endoplasmic reticulum (ER). As part of the SRP complex, associates with the SRP receptor (SR) component SRPRA to target secretory proteins to the endoplasmic reticulum membrane. Binds to the signal sequence of presecretory proteins when they emerge from the ribosomes. Displays basal GTPase activity, and stimulates reciprocal GTPase activation of the SR subunit SRPRA. Forms a guanosine 5'-triphosphate (GTP)-dependent complex with the SR subunit SRPRA. SR compaction and GTPase mediated rearrangement of SR drive SRP-mediated cotranslational protein translocation into the ER. Requires the presence of SRP9/SRP14 and/or SRP19 to stably interact with RNA. Plays a role in proliferation and differentiation of granulocytic cells, neutrophils migration capacity and exocrine pancreas development. The polypeptide is Signal recognition particle subunit SRP54 (Homo sapiens (Human)).